Reading from the N-terminus, the 311-residue chain is tRNA-cytidine(32) 2-sulfurtransferase (311 aa).

The PP-loop motif motif lies at 47 to 52 (SGGKDS). Residues Cys122, Cys125, and Cys213 each coordinate [4Fe-4S] cluster.

It belongs to the TtcA family. Homodimer. Requires Mg(2+) as cofactor. It depends on [4Fe-4S] cluster as a cofactor.

It localises to the cytoplasm. It catalyses the reaction cytidine(32) in tRNA + S-sulfanyl-L-cysteinyl-[cysteine desulfurase] + AH2 + ATP = 2-thiocytidine(32) in tRNA + L-cysteinyl-[cysteine desulfurase] + A + AMP + diphosphate + H(+). It functions in the pathway tRNA modification. In terms of biological role, catalyzes the ATP-dependent 2-thiolation of cytidine in position 32 of tRNA, to form 2-thiocytidine (s(2)C32). The sulfur atoms are provided by the cysteine/cysteine desulfurase (IscS) system. The chain is tRNA-cytidine(32) 2-sulfurtransferase from Salmonella choleraesuis (strain SC-B67).